The primary structure comprises 410 residues: Ribosomal RNA large subunit methyltransferase G (410 aa).

This sequence belongs to the methyltransferase superfamily. RlmG family.

Its subcellular location is the cytoplasm. It carries out the reaction guanosine(1835) in 23S rRNA + S-adenosyl-L-methionine = N(2)-methylguanosine(1835) in 23S rRNA + S-adenosyl-L-homocysteine + H(+). Functionally, specifically methylates the guanine in position 1835 (m2G1835) of 23S rRNA. This is Ribosomal RNA large subunit methyltransferase G from Alteromonas mediterranea (strain DSM 17117 / CIP 110805 / LMG 28347 / Deep ecotype).